Reading from the N-terminus, the 321-residue chain is MYTKILGTGSYLPVQVRSNADLEKMVDTSDEWIVTRTGIRERRIAGPDETVASMGFQAAKKALEMAVIDEGIDKKDIGLIIVATTSSSHAFPSSACQVQQMLGIEDAASFDLAAACAGFTYALSVADQYVKSGAVKHAIVIGSDMLSRALDPEDRGTIILFGDGAGAVVLGASEEPGILSTHLHADGKYGELLALPYPDRQHQEQPAYVTMAGNEVFKVAVTELAHIVDETLQANNLDRSALDWLVPHQANLRIISATAKKLGMGMDKVVITLDRHGNTSAASVPAAFDEAVRDGRIQRGQLVLLEAFGGGFTWGSALVRF.

Catalysis depends on residues Cys116 and His248. Residues 249–253 are ACP-binding; the sequence is QANLR. Residue Asn278 is part of the active site.

The protein belongs to the thiolase-like superfamily. FabH family. Homodimer.

Its subcellular location is the cytoplasm. It catalyses the reaction malonyl-[ACP] + acetyl-CoA + H(+) = 3-oxobutanoyl-[ACP] + CO2 + CoA. It functions in the pathway lipid metabolism; fatty acid biosynthesis. Functionally, catalyzes the condensation reaction of fatty acid synthesis by the addition to an acyl acceptor of two carbons from malonyl-ACP. Catalyzes the first condensation reaction which initiates fatty acid synthesis and may therefore play a role in governing the total rate of fatty acid production. Possesses both acetoacetyl-ACP synthase and acetyl transacylase activities. Its substrate specificity determines the biosynthesis of branched-chain and/or straight-chain of fatty acids. The protein is Beta-ketoacyl-[acyl-carrier-protein] synthase III of Yersinia enterocolitica serotype O:8 / biotype 1B (strain NCTC 13174 / 8081).